We begin with the raw amino-acid sequence, 544 residues long: Methyl-accepting chemotaxis protein McpP (544 aa).

The next 3 helical transmembrane spans lie at 12–32, 50–70, and 192–212; these read RLWLILVVAVAMLVVLGLLML, VVQTAAGVLAYYQGLEAAGTL, and DASLVGVGIALLMALVVMLIA. In terms of domain architecture, HAMP spans 213–267; it reads RSIARPLQEAVQAMGNIASGESDLTRRLDTHGSDEITHLGEHFNRFNGKLQGVVG. The Methyl-accepting transducer domain maps to 272-508; that stretch reads AAHALAQSAG…EINRNVLDTA (237 aa).

The protein belongs to the methyl-accepting chemotaxis (MCP) protein family.

It is found in the cell membrane. Chemotactic-signal transducers respond to changes in the concentration of attractants and repellents in the environment, transduce a signal from the outside to the inside of the cell, and facilitate sensory adaptation through the variation of the level of methylation. McpP is a chemoreceptor that responds specifically to some C2 and C3 carboxylic acids. Recognizes acetate, pyruvate, propionate, and L-lactate. In Pseudomonas putida (strain ATCC 47054 / DSM 6125 / CFBP 8728 / NCIMB 11950 / KT2440), this protein is Methyl-accepting chemotaxis protein McpP.